The primary structure comprises 696 residues: C2 domain-containing protein 2 (696 aa).

Residues 13-33 traverse the membrane as a helical segment; that stretch reads AQWLALVSLFVAALATVGLYL. The SMP-LBD domain occupies 51–242; sequence EPGEGPRPGS…PTTVKEAQNL (192 aa). Residue Ser-60 is modified to Phosphoserine. In terms of domain architecture, C2 spans 245–362; the sequence is AASTAQESCP…KKQPSGPQSF (118 aa). Residues Ser-435 and Ser-441 each carry the phosphoserine modification. At Thr-445 the chain carries Phosphothreonine. The tract at residues 539-580 is disordered; that stretch reads VDSTHQEDAPSHPERAAASAPPEEAESAQASLAPKPQEDELD. The span at 542 to 553 shows a compositional bias: basic and acidic residues; sequence THQEDAPSHPER. Over residues 554-572 the composition is skewed to low complexity; that stretch reads AAASAPPEEAESAQASLAP. Phosphoserine is present on Ser-581.

Its subcellular location is the membrane. The sequence is that of C2 domain-containing protein 2 (C2CD2) from Homo sapiens (Human).